The chain runs to 462 residues: tRNA-2-methylthio-N(6)-dimethylallyladenosine synthase (462 aa).

In terms of domain architecture, MTTase N-terminal spans 1–116; the sequence is MKLFIQTLGC…ITQVLERPKA (116 aa). Residues Cys-10, Cys-47, Cys-79, Cys-148, Cys-152, and Cys-155 each coordinate [4Fe-4S] cluster. In terms of domain architecture, Radical SAM core spans 134-370; it reads QGMGIKAHLN…NLHKEILSKK (237 aa). The region spanning 372 to 436 is the TRAM domain; it reads QLEIGRIHNV…GGGLMGRFIN (65 aa).

It belongs to the methylthiotransferase family. MiaB subfamily. Monomer. It depends on [4Fe-4S] cluster as a cofactor.

The protein localises to the cytoplasm. It carries out the reaction N(6)-dimethylallyladenosine(37) in tRNA + (sulfur carrier)-SH + AH2 + 2 S-adenosyl-L-methionine = 2-methylsulfanyl-N(6)-dimethylallyladenosine(37) in tRNA + (sulfur carrier)-H + 5'-deoxyadenosine + L-methionine + A + S-adenosyl-L-homocysteine + 2 H(+). Its function is as follows. Catalyzes the methylthiolation of N6-(dimethylallyl)adenosine (i(6)A), leading to the formation of 2-methylthio-N6-(dimethylallyl)adenosine (ms(2)i(6)A) at position 37 in tRNAs that read codons beginning with uridine. This chain is tRNA-2-methylthio-N(6)-dimethylallyladenosine synthase, found in Helicobacter hepaticus (strain ATCC 51449 / 3B1).